The primary structure comprises 504 residues: Protein FMP42 (504 aa).

Over 1–11 the chain is Vacuolar; sequence MTSTRTLRYAQ. The helical transmembrane segment at 12-32 threads the bilayer; sequence VACACIWCLFSAGIIFGFAAL. Residues 33 to 64 are Cytoplasmic-facing; it reads KPILISEGVYHELCDPKDGDRLLCTAQDLKLN. Residues 65–85 traverse the membrane as a helical segment; the sequence is FIFALSATVTNIMALPVGKIL. Over 86 to 91 the chain is Vacuolar; it reads DMYGPR. Residues 92 to 112 traverse the membrane as a helical segment; the sequence is VCGIIGSCLLFLASGNFISAK. Topologically, residues 113-119 are cytoplasmic; it reads HLVSLWD. A helical membrane pass occupies residues 120–140; it reads PYLVGYTLLAVAGPFVFISCF. Over 141–150 the chain is Vacuolar; the sequence is QLANSFPQRS. The chain crosses the membrane as a helical span at residues 151 to 171; it reads GTVLALLTGSFDSSSALFLLY. The Cytoplasmic portion of the chain corresponds to 172–186; sequence RLLYQNWFPTLNVSR. The chain crosses the membrane as a helical span at residues 187–207; sequence FFTLYLIVPVFILACQLTIMP. At 208-302 the chain is on the vacuolar side; sequence HSSYKTVNHI…KSAYEQIKSP (95 aa). Phosphoserine is present on residues serine 238, serine 249, and serine 269. Residues 303–323 form a helical membrane-spanning segment; sequence WFYLMLLFALVAMLRINYFIA. The Cytoplasmic segment spans residues 324 to 344; the sequence is TVRTQEEYLLNDPDLALKLNS. The chain crosses the membrane as a helical span at residues 345 to 365; that stretch reads IFDMLLPLGGAVSIPFIGLLL. At 366–385 the chain is on the vacuolar side; that stretch reads DHTDTLSTLTILFTTSTAIG. The helical transmembrane segment at 386–406 threads the bilayer; the sequence is VFGLIPNSFTWNLIGIVLLVV. Over 407 to 421 the chain is Cytoplasmic; sequence YRPFYYTVVSDYSSK. A helical membrane pass occupies residues 422 to 442; it reads VFGFDTFGTVYGLLSCICGIF. Residues 443-462 are Vacuolar-facing; sequence NMSQNLLDKWTHTTFNMNPF. A helical membrane pass occupies residues 463-483; sequence PINLTLVILTVVFSLTLTFYI. Topologically, residues 484–504 are cytoplasmic; that stretch reads RSQILPKPVNERGLSSNYQTI.

It belongs to the SLC43A transporter (TC 2.A.1.44) family.

The protein resides in the vacuole membrane. This is Protein FMP42 (FMP42) from Saccharomyces cerevisiae (strain ATCC 204508 / S288c) (Baker's yeast).